The sequence spans 198 residues: MSISLFGRIVSQQFSGIRAAGPGRSLYLPFTLLLKQPGAYKVSLHRYVHSTQTKSHLSFLMNNNDITPFQKFTVKVLKEQCKSRGLKLSGRKSDLLQRLITHDSCSNKKSSVKINEPKKKRILINDPIKITKKLVSDKTFRTIEKNISSLQNTPVIETPCDVHSHLQPRDRIFLLGFFMLSCLWWNLEPQESKPTIDH.

The transit peptide at 1–55 (MSISLFGRIVSQQFSGIRAAGPGRSLYLPFTLLLKQPGAYKVSLHRYVHSTQTKS) directs the protein to the mitochondrion. Residues 69–103 (FQKFTVKVLKEQCKSRGLKLSGRKSDLLQRLITHD) enclose the SAP domain. The chain crosses the membrane as a helical span at residues 172–187 (IFLLGFFMLSCLWWNL).

It belongs to the AIM34 family.

The protein resides in the mitochondrion membrane. This Saccharomyces cerevisiae (strain JAY291) (Baker's yeast) protein is Altered inheritance of mitochondria protein 34, mitochondrial (AIM34).